Reading from the N-terminus, the 263-residue chain is L-histidine 2-aminobutanoyltransferase (263 aa).

This sequence belongs to the methyltransferase superfamily. CntL family.

It catalyses the reaction L-histidine + S-adenosyl-L-methionine = (2S)-2-amino-4-{[(1S)-1-carboxy-2-(1H-imidazol-4-yl)ethyl]amino}butanoate + S-methyl-5'-thioadenosine + H(+). Catalyzes the nucleophilic attack of one alpha-aminobutanoate moiety from SAM onto L-histidine to produce the intermediate (2S)-2-amino-4-{[(1S)-1-carboxy-2-(1H-imidazol-4-yl)ethyl]amino}butanoate. Functions in the biosynthesis of the metallophore pseudopaline, which is involved in the acquisition of nickel and zinc, and thus enables bacterial growth inside the host, where metal access is limited. Therefore, this enzyme probably contributes to Pseudomonas virulence. Appears to be specific for L-histidine as substrate. This chain is L-histidine 2-aminobutanoyltransferase, found in Pseudomonas aeruginosa (strain ATCC 15692 / DSM 22644 / CIP 104116 / JCM 14847 / LMG 12228 / 1C / PRS 101 / PAO1).